A 590-amino-acid polypeptide reads, in one-letter code: Leishmanolysin (590 aa).

The signal sequence occupies residues 1–39 (MSVDSSSTHRHRSVAARLVRLAAAGAAVIAAVGTAAAWA). Positions 40 to 87 (HAGAVQHRCIHDAMQARVRQSVARHHTAPGAVSAVGLSYVTLGAAPTV) are cleaved as a propeptide — activation peptide. Disulfide bonds link C112–C129 and C178–C217. A Zn(2+)-binding site is contributed by H251. E252 is a catalytic residue. H255 contributes to the Zn(2+) binding site. The N-linked (GlcNAc...) asparagine glycan is linked to N287. Cystine bridges form between C301–C373, C380–C443, C393–C412, C402–C477, C454–C498, C503–C553, and C523–C546. Residue H321 coordinates Zn(2+). Residue N565 is the site of GPI-anchor amidated asparagine attachment. Positions 566–590 (AAAGRRGPRAAATALLVAALLAVAL) are cleaved as a propeptide — removed in mature form.

This sequence belongs to the peptidase M8 family. Zn(2+) is required as a cofactor.

Its subcellular location is the cell membrane. It catalyses the reaction Preference for hydrophobic residues at P1 and P1' and basic residues at P2' and P3'. A model nonapeptide is cleaved at -Ala-Tyr-|-Leu-Lys-Lys-.. In terms of biological role, has an integral role during the infection of macrophages in the mammalian host. The protein is Leishmanolysin (gp63) of Leishmania donovani.